The following is a 212-amino-acid chain: Pyridoxine/pyridoxamine 5'-phosphate oxidase (212 aa).

Residues 8–11 (RREY) and Lys-66 contribute to the substrate site. Residues 61 to 66 (RIVLLK), 76 to 77 (FT), Arg-82, Lys-83, and Gln-105 contribute to the FMN site. Substrate-binding residues include Tyr-123, Arg-127, and Ser-131. FMN is bound by residues 140 to 141 (QS) and Trp-185. Residue 191–193 (RLH) coordinates substrate. Arg-195 provides a ligand contact to FMN.

It belongs to the pyridoxamine 5'-phosphate oxidase family. In terms of assembly, homodimer. Requires FMN as cofactor.

It catalyses the reaction pyridoxamine 5'-phosphate + O2 + H2O = pyridoxal 5'-phosphate + H2O2 + NH4(+). The catalysed reaction is pyridoxine 5'-phosphate + O2 = pyridoxal 5'-phosphate + H2O2. Its pathway is cofactor metabolism; pyridoxal 5'-phosphate salvage; pyridoxal 5'-phosphate from pyridoxamine 5'-phosphate: step 1/1. It functions in the pathway cofactor metabolism; pyridoxal 5'-phosphate salvage; pyridoxal 5'-phosphate from pyridoxine 5'-phosphate: step 1/1. In terms of biological role, catalyzes the oxidation of either pyridoxine 5'-phosphate (PNP) or pyridoxamine 5'-phosphate (PMP) into pyridoxal 5'-phosphate (PLP). This is Pyridoxine/pyridoxamine 5'-phosphate oxidase from Shewanella sp. (strain ANA-3).